The chain runs to 303 residues: 1D-myo-inositol 2-acetamido-2-deoxy-alpha-D-glucopyranoside deacetylase 1 (303 aa).

The Zn(2+) site is built by H15, D18, and H157.

It belongs to the MshB deacetylase family. Zn(2+) serves as cofactor.

The enzyme catalyses 1D-myo-inositol 2-acetamido-2-deoxy-alpha-D-glucopyranoside + H2O = 1D-myo-inositol 2-amino-2-deoxy-alpha-D-glucopyranoside + acetate. Catalyzes the deacetylation of 1D-myo-inositol 2-acetamido-2-deoxy-alpha-D-glucopyranoside (GlcNAc-Ins) in the mycothiol biosynthesis pathway. The chain is 1D-myo-inositol 2-acetamido-2-deoxy-alpha-D-glucopyranoside deacetylase 1 from Saccharopolyspora erythraea (strain ATCC 11635 / DSM 40517 / JCM 4748 / NBRC 13426 / NCIMB 8594 / NRRL 2338).